A 115-amino-acid chain; its full sequence is Non-specific lipid-transfer protein 4.3 (115 aa).

The signal sequence occupies residues 1–25; it reads MARAAATQLVLVAMVAAMLLVATDA. Cystine bridges form between C29-C77, C39-C54, C55-C97, and C75-C111.

It belongs to the plant LTP family.

Plant non-specific lipid-transfer proteins transfer phospholipids as well as galactolipids across membranes. May play a role in wax or cutin deposition in the cell walls of expanding epidermal cells and certain secretory tissues. This chain is Non-specific lipid-transfer protein 4.3 (LTP4.3), found in Hordeum vulgare (Barley).